Reading from the N-terminus, the 555-residue chain is MIPFLLMVAFADTVLQVSAQSQPSCDSKVYCQGKLLHVVEMSRIFNDSKTFVELKMINDEQTTLENFDNFLRDTNHKRTRADLMKFVSDNFKQENEFESWTPTDFTDNPTLLSRIEDKTIRQFAQDLVKIWPTLARKVKKEVLDYPEHYSLLPVDNGFIIPGGRFTEFYYWDSYWIVEGLLLSDMHETVRGMLDNFLSIVEKYGFIPNGARVFYLNRSQPPLLTLMVSLYVSATNDMEWLAKNIRTIDTELRFWLNNRLVDVVKDGIVYKLAQYNSNSGSPRPESYYEDVTTASVFSDERDKAELYMDLKSAAESGWDFSSRWIVDEYGGTRGNLSALHTRRIIPVDLNAFLCQAFQKLSEFYQTLGDYPNATFWSKLVKIWQHSIEMVHYNRDDGIWYDWDNELSQHRRMFFPSNFAPLWSETFDSRNAEILGEMAAEYFITQNMMDYHGGIPTSLSHTGEQWDYPNAWPPMQSIIVMGLDKSGSYRAKQLARELARRWVKANLIGFRQTGEMFEKYNVEVPGQNGGGGEYVVQSGFGWTNGVVLEFINQFFTT.

An N-terminal signal peptide occupies residues Met1 to Gln16. N-linked (GlcNAc...) asparagine glycosylation is present at Asn46. Substrate contacts are provided by residues Arg164, Trp171–Asp172, and Asn208. Asn216 carries N-linked (GlcNAc...) asparagine glycosylation. Residues Arg217 to Gln219, Arg282 to Glu284, and Gly316 contribute to the substrate site. Residue Asp318 is the Proton donor/acceptor of the active site. 2 N-linked (GlcNAc...) asparagine glycosylation sites follow: Asn334 and Asn371. Catalysis depends on Glu516, which acts as the Proton donor/acceptor. Glu531 is a substrate binding site.

It belongs to the glycosyl hydrolase 37 family. As to expression, bean-shaped accessory glands (bags).

The protein resides in the secreted. It carries out the reaction alpha,alpha-trehalose + H2O = alpha-D-glucose + beta-D-glucose. This chain is Trehalase, found in Tenebrio molitor (Yellow mealworm beetle).